The sequence spans 747 residues: Histone-lysine N-methyltransferase EZH1 (747 aa).

Residues 186 to 229 are disordered; it reads YSDEDEEGHNDTSDGKQDDSKEDLPVTRKRKRHAIEGSKKSSKK. The segment covering 194–211 has biased composition (basic and acidic residues); sequence HNDTSDGKQDDSKEDLPV. Residue Lys327 forms a Glycyl lysine isopeptide (Lys-Gly) (interchain with G-Cter in SUMO2) linkage. The tract at residues 375–421 is disordered; it reads TSASAVAETKEGDSDRDTGNDWASSSSEANSRCQTPTKQKASPAPPQ. A compositionally biased stretch (basic and acidic residues) spans 382–393; it reads ETKEGDSDRDTG. Over residues 395–414 the composition is skewed to polar residues; it reads DWASSSSEANSRCQTPTKQK. In terms of domain architecture, CXC spans 504–606; the sequence is CRKIQLKKDN…CKVVSCKNCS (103 aa). One can recognise an SET domain in the interval 613–728; that stretch reads KHLLLAPSDV…AGEELFFDYR (116 aa).

This sequence belongs to the class V-like SAM-binding methyltransferase superfamily. Histone-lysine methyltransferase family. EZ subfamily. Component of the PRC2/EED-EZH1 complex, which includes EED, EZH1, SUZ12, RBBP4 and AEBP2. The PRC2/EED-EZH1 is less abundant than the PRC2/EED-EZH2 complex, has weak methyltransferase activity and compacts chromatin in the absence of the methyltransferase cofactor S-adenosyl-L-methionine (SAM). Interacts with EZHIP; the interaction blocks EZH1 methyltransferase activity.

It localises to the nucleus. It catalyses the reaction L-lysyl(27)-[histone H3] + 3 S-adenosyl-L-methionine = N(6),N(6),N(6)-trimethyl-L-lysyl(27)-[histone H3] + 3 S-adenosyl-L-homocysteine + 3 H(+). Its function is as follows. Polycomb group (PcG) protein. Catalytic subunit of the PRC2/EED-EZH1 complex, which methylates 'Lys-27' of histone H3, leading to transcriptional repression of the affected target gene. Able to mono-, di- and trimethylate 'Lys-27' of histone H3 to form H3K27me1, H3K27me2 and H3K27me3, respectively. Required for embryonic stem cell derivation and self-renewal, suggesting that it is involved in safeguarding embryonic stem cell identity. Compared to EZH2-containing complexes, it is less abundant in embryonic stem cells, has weak methyltransferase activity and plays a less critical role in forming H3K27me3, which is required for embryonic stem cell identity and proper differentiation. This is Histone-lysine N-methyltransferase EZH1 (EZH1) from Bos taurus (Bovine).